Reading from the N-terminus, the 75-residue chain is Protein SlyX homolog (75 aa).

Belongs to the SlyX family.

This chain is Protein SlyX homolog, found in Chromobacterium violaceum (strain ATCC 12472 / DSM 30191 / JCM 1249 / CCUG 213 / NBRC 12614 / NCIMB 9131 / NCTC 9757 / MK).